A 360-amino-acid polypeptide reads, in one-letter code: Phospho-N-acetylmuramoyl-pentapeptide-transferase (360 aa).

10 consecutive transmembrane segments (helical) span residues 26–46 (AILGLLTALVFSLWWGPILIK), 73–93 (TMGGILILAGIFISVLLWGDL), 97–117 (YVLVTLFVLASFGVIGFIDDY), 135–155 (ALQSIAALVVAVYLYSSSTMV), 168–188 (IMPQLGFMFILLAYFTIVGAS), 199–219 (GLAIMPTVMVAAAFALIAYLS), 236–256 (AGELVIVCTAMVGAGLGFLWF), 263–283 (VFMGDVGSLALGAALGVIAIL), 288–308 (ILLVIMGGVFVMETVSVILQV), and 338–358 (VIVRFWIISLFLVLLGLATLK).

Belongs to the glycosyltransferase 4 family. MraY subfamily. It depends on Mg(2+) as a cofactor.

It localises to the cell inner membrane. It carries out the reaction UDP-N-acetyl-alpha-D-muramoyl-L-alanyl-gamma-D-glutamyl-meso-2,6-diaminopimeloyl-D-alanyl-D-alanine + di-trans,octa-cis-undecaprenyl phosphate = di-trans,octa-cis-undecaprenyl diphospho-N-acetyl-alpha-D-muramoyl-L-alanyl-D-glutamyl-meso-2,6-diaminopimeloyl-D-alanyl-D-alanine + UMP. It participates in cell wall biogenesis; peptidoglycan biosynthesis. Its function is as follows. Catalyzes the initial step of the lipid cycle reactions in the biosynthesis of the cell wall peptidoglycan: transfers peptidoglycan precursor phospho-MurNAc-pentapeptide from UDP-MurNAc-pentapeptide onto the lipid carrier undecaprenyl phosphate, yielding undecaprenyl-pyrophosphoryl-MurNAc-pentapeptide, known as lipid I. In Shewanella frigidimarina (strain NCIMB 400), this protein is Phospho-N-acetylmuramoyl-pentapeptide-transferase.